We begin with the raw amino-acid sequence, 275 residues long: Large ribosomal subunit protein uL2 (275 aa).

The disordered stretch occupies residues 223 to 260 (VAMNPVDHPHGGGEGRTSGGRHPVSPWGLPTKGYKTRS).

It belongs to the universal ribosomal protein uL2 family. In terms of assembly, part of the 50S ribosomal subunit. Forms a bridge to the 30S subunit in the 70S ribosome.

Functionally, one of the primary rRNA binding proteins. Required for association of the 30S and 50S subunits to form the 70S ribosome, for tRNA binding and peptide bond formation. It has been suggested to have peptidyltransferase activity; this is somewhat controversial. Makes several contacts with the 16S rRNA in the 70S ribosome. This chain is Large ribosomal subunit protein uL2, found in Legionella pneumophila (strain Paris).